The sequence spans 338 residues: MALCVLRNTVRGAAALPRLKASHVVSVYKPRYSSLSNHKYVPRRAVLYVPGNDEKKIRKIPSLKVDCAVLDCEDGVAENKKNEARLRIAKTLEDFDLGTTEKCVRINSVSSGLAEVDLETFLQARVLPSSLMLPKVEGPEEIRWFSDKFSLHLKGRKLEQPMNLIPFVETAMGLLNFKAVCEETLKTGPQVGLCLDAVVFGGEDFRASIGATSNKDTQDILYARQKVVVTAKAFGLQAIDLVYIDFRDEDGLLRQSREAAAMGFTGKQVIHPNQIAVVQEQFTPTPEKIQWAEELIAAFKEHQQLGKGAFTFRGSMIDMPLLKQAQNIVTLATSIKEK.

The transit peptide at 1 to 20 (MALCVLRNTVRGAAALPRLK) directs the protein to the mitochondrion. Substrate is bound by residues Tyr48, Lys55, and Lys59. 3 positions are modified to N6-acetyllysine: Lys55, Lys59, and Lys64. N6-acetyllysine; alternate occurs at positions 80 and 90. N6-succinyllysine; alternate is present on residues Lys80 and Lys90. Arg105 serves as a coordination point for substrate. Residues Glu169 and Asp204 each coordinate Mg(2+). A substrate-binding site is contributed by 270–271 (IH). Lys307 is subject to N6-succinyllysine. Residue Asp318 is part of the active site.

It belongs to the HpcH/HpaI aldolase family. Citrate lyase beta subunit-like subfamily. In terms of assembly, homotrimer. Mg(2+) is required as a cofactor. As to expression, detected in brown fat, brain, liver, kidney, heart, skeletal muscle and ovary (at protein level).

The protein localises to the mitochondrion. It catalyses the reaction glyoxylate + acetyl-CoA + H2O = (S)-malate + CoA + H(+). The enzyme catalyses propanoyl-CoA + glyoxylate + H2O = 3-methylmalate + CoA + H(+). The catalysed reaction is (3S)-citramalyl-CoA = pyruvate + acetyl-CoA. It carries out the reaction (S)-malyl-CoA + H2O = (S)-malate + CoA + H(+). Its function is as follows. Mitochondrial citramalyl-CoA lyase indirectly involved in the vitamin B12 metabolism. Converts citramalyl-CoA into acetyl-CoA and pyruvate in the C5-dicarboxylate catabolism pathway. The C5-dicarboxylate catabolism pathway is required to detoxify itaconate, a vitamin B12-poisoning metabolite. Also acts as a malate synthase in vitro, converting glyoxylate and acetyl-CoA to malate. Also displays malyl-CoA thioesterase activity. Also acts as a beta-methylmalate synthase in vitro, by mediating conversion of glyoxylate and propionyl-CoA to beta-methylmalate. Also has very weak citramalate synthase activity in vitro. The polypeptide is Citramalyl-CoA lyase, mitochondrial (Mus musculus (Mouse)).